Consider the following 196-residue polypeptide: Inosine triphosphate pyrophosphatase 2 (196 aa).

Residue T20 to K25 participates in ITP binding. E48 lines the Mg(2+) pocket. Residues K61, D77–T78, K94, F153–D156, K177, and P182–R183 each bind ITP.

Belongs to the HAM1 NTPase family. As to quaternary structure, homodimer. Mg(2+) serves as cofactor. It depends on Mn(2+) as a cofactor.

Its subcellular location is the cytoplasm. It catalyses the reaction ITP + H2O = IMP + diphosphate + H(+). The enzyme catalyses dITP + H2O = dIMP + diphosphate + H(+). The catalysed reaction is XTP + H2O = XMP + diphosphate + H(+). In terms of biological role, pyrophosphatase that hydrolyzes non-canonical purine nucleotides such as inosine triphosphate (ITP), deoxyinosine triphosphate (dITP) or xanthosine 5'-triphosphate (XTP) to their respective monophosphate derivatives. The enzyme does not distinguish between the deoxy- and ribose forms. Probably excludes non-canonical purines from RNA and DNA precursor pools, thus preventing their incorporation into RNA and DNA and avoiding chromosomal lesions. The chain is Inosine triphosphate pyrophosphatase 2 from Trypanosoma cruzi (strain CL Brener).